A 485-amino-acid polypeptide reads, in one-letter code: Iroquois-class homeodomain protein IRX-4 (485 aa).

Positions 142–203 form a DNA-binding region, homeobox; TALE-type; it reads GTRRKNATRE…NARRRLKKEN (62 aa). The interval 206-313 is disordered; sequence TWPPRNKCSD…EEEEAAERAR (108 aa). Residues 221–232 show a composition bias toward acidic residues; it reads EEEEEEEEECSQ. The segment covering 234 to 253 has biased composition (basic and acidic residues); sequence DAMKSEKAEEPTGKEEKELE. Residues 254–269 show a composition bias toward acidic residues; it reads LSDLEDLDAAESESSE. The segment covering 282-294 has biased composition (pro residues); sequence HPLPGGGPPPRAA.

This sequence belongs to the TALE/IRO homeobox family. Ventricles of the heart, developing feather buds, retina, hindbrain.

The protein localises to the nucleus. Functionally, regulates the chamber-specific expression of myosin isoforms by activating the expression of the ventricle myosin heavy chain-1 (Vmhc1) and suppressing the expression of the atrial myosin heavy chain-1 (Amhc1) in the ventricles. May play a critical role in establishing chamber-specific gene expression in the developing heart. This is Iroquois-class homeodomain protein IRX-4 (IRX4) from Gallus gallus (Chicken).